Reading from the N-terminus, the 108-residue chain is Nucleoid-associated protein Avin_19840 (108 aa).

Belongs to the YbaB/EbfC family. Homodimer.

The protein localises to the cytoplasm. Its subcellular location is the nucleoid. In terms of biological role, binds to DNA and alters its conformation. May be involved in regulation of gene expression, nucleoid organization and DNA protection. The sequence is that of Nucleoid-associated protein Avin_19840 from Azotobacter vinelandii (strain DJ / ATCC BAA-1303).